Reading from the N-terminus, the 450-residue chain is Plasminogen-binding protein PgbA (450 aa).

Basic and acidic residues-rich tracts occupy residues 262 to 273 (EIKQEAIKEPKK), 284 to 310 (LEEKNYQKAERKFDAKEERRRSRDERK), and 317 to 362 (KAME…REIN). The segment at 262 to 450 (EIKQEAIKEP…RRKALEMNKK (189 aa)) is disordered. The span at 363–386 (QESANEPSSENNATLKDTENTSVL) shows a compositional bias: polar residues. The segment covering 389 to 450 (SAAKKEAPKP…RRKALEMNKK (62 aa)) has biased composition (basic and acidic residues).

It localises to the cell surface. Functionally, binds plasminogen, specifically, and in a concentration and lysine-dependent manner. Plasminogen is the precursor of plasmin, a serine protease that cleaves fibrin, fibronectin, laminin and vitronectin. Acquisition of plasminogen/plasmin could enable H.pylori to degrade host components. This is Plasminogen-binding protein PgbA (pgbA) from Helicobacter pylori (strain J99 / ATCC 700824) (Campylobacter pylori J99).